The following is a 228-amino-acid chain: Ribose-5-phosphate isomerase A (228 aa).

Residues 32 to 35, 85 to 88, and 98 to 101 contribute to the substrate site; these read TGST, DGAD, and KGGG. The active-site Proton acceptor is the Glu107. Lys125 lines the substrate pocket.

It belongs to the ribose 5-phosphate isomerase family. Homodimer.

It carries out the reaction aldehydo-D-ribose 5-phosphate = D-ribulose 5-phosphate. Its pathway is carbohydrate degradation; pentose phosphate pathway; D-ribose 5-phosphate from D-ribulose 5-phosphate (non-oxidative stage): step 1/1. Its function is as follows. Catalyzes the reversible conversion of ribose-5-phosphate to ribulose 5-phosphate. The polypeptide is Ribose-5-phosphate isomerase A (Cupriavidus taiwanensis (strain DSM 17343 / BCRC 17206 / CCUG 44338 / CIP 107171 / LMG 19424 / R1) (Ralstonia taiwanensis (strain LMG 19424))).